A 757-amino-acid chain; its full sequence is Activating signal cointegrator 1 complex subunit 2 (757 aa).

Thr-233 is modified (phosphothreonine). A Phosphoserine modification is found at Ser-447. The region spanning 467-510 (ELDSLISQVKDLLPDLGEGFILACLEYYHYDPEQVINNILEERL) is the CUE domain. Disordered stretches follow at residues 617–687 (DDTY…VLRE) and 699–757 (KKGY…MIPS). Ser-632 is modified (phosphoserine). A compositionally biased stretch (acidic residues) spans 657 to 670 (QEEDDDDEEDDADE). Over residues 671 to 687 (EAPKPDHFVQDPAVLRE) the composition is skewed to basic and acidic residues. Ser-713 carries the phosphoserine modification. The segment covering 719 to 734 (QSRETTQERRKKEANK) has biased composition (basic and acidic residues).

It belongs to the ASCC2 family. In terms of assembly, identified in the ASCC complex that contains ASCC1, ASCC2 and ASCC3. Interacts directly with ASCC3. The ASCC complex interacts with ALKBH3. Interacts (via CUE domain) with 'Lys-63'-linked polyubiquitin chains, but not with 'Lys-48'-linked polyubiquitin chains. Part of the ASC-1 complex, that contains TRIP4, ASCC1, ASCC2 and ASCC3. Component of the RQT (ribosome quality control trigger) complex, that contains ASCC2, ASCC3 and TRIP4. Interacts with CSRP1. Interacts with PRPF8, a component of the spliceosome. Interacts with ZCCHC4. As to expression, ubiquitous.

It localises to the nucleus. Its subcellular location is the nucleus speckle. Functionally, ubiquitin-binding protein involved in DNA repair and rescue of stalled ribosomes. Plays a role in DNA damage repair as component of the ASCC complex. Recruits ASCC3 and ALKBH3 to sites of DNA damage by binding to polyubiquitinated proteins that have 'Lys-63'-linked polyubiquitin chains. Part of the ASC-1 complex that enhances NF-kappa-B, SRF and AP1 transactivation. Involved in activation of the ribosome quality control (RQC) pathway, a pathway that degrades nascent peptide chains during problematic translation. Specifically recognizes and binds RPS20/uS10 ubiquitinated by ZNF598, promoting recruitment of the RQT (ribosome quality control trigger) complex on stalled ribosomes, followed by disassembly of stalled ribosomes. The polypeptide is Activating signal cointegrator 1 complex subunit 2 (ASCC2) (Homo sapiens (Human)).